The sequence spans 210 residues: Cdc42 effector protein 2 (210 aa).

Residue S2 is modified to N-acetylserine. The CRIB domain maps to 30–44 (ISPPLGDFRHTIHIG). 3 positions are modified to phosphoserine: S31, S101, and S141. Positions 124 to 145 (AQAPPKPPRLHLETPQASPQEA) are disordered.

This sequence belongs to the BORG/CEP family. As to quaternary structure, interacts with CDC42 and RHOQ, in a GTP-dependent manner, and with SEPT7.

The protein localises to the endomembrane system. The protein resides in the cytoplasm. Its subcellular location is the cytoskeleton. Functionally, probably involved in the organization of the actin cytoskeleton. May act downstream of CDC42 to induce actin filament assembly leading to cell shape changes. Induces pseudopodia formation in fibroblasts in a CDC42-dependent manner. The sequence is that of Cdc42 effector protein 2 (CDC42EP2) from Bos taurus (Bovine).